The primary structure comprises 398 residues: 1-deoxy-D-xylulose 5-phosphate reductoisomerase (398 aa).

T10, G11, S12, V13, G36, K37, N38, and N124 together coordinate NADPH. K125 is a 1-deoxy-D-xylulose 5-phosphate binding site. E126 is a binding site for NADPH. A Mn(2+)-binding site is contributed by D150. 4 residues coordinate 1-deoxy-D-xylulose 5-phosphate: S151, E152, S186, and H209. E152 serves as a coordination point for Mn(2+). G215 contributes to the NADPH binding site. Residues S222, N227, K228, and E231 each contribute to the 1-deoxy-D-xylulose 5-phosphate site. Residue E231 participates in Mn(2+) binding.

The protein belongs to the DXR family. In terms of assembly, homodimer. Mg(2+) is required as a cofactor. The cofactor is Mn(2+).

The catalysed reaction is 2-C-methyl-D-erythritol 4-phosphate + NADP(+) = 1-deoxy-D-xylulose 5-phosphate + NADPH + H(+). It functions in the pathway isoprenoid biosynthesis; isopentenyl diphosphate biosynthesis via DXP pathway; isopentenyl diphosphate from 1-deoxy-D-xylulose 5-phosphate: step 1/6. Catalyzes the NADPH-dependent rearrangement and reduction of 1-deoxy-D-xylulose-5-phosphate (DXP) to 2-C-methyl-D-erythritol 4-phosphate (MEP). This is 1-deoxy-D-xylulose 5-phosphate reductoisomerase from Photorhabdus laumondii subsp. laumondii (strain DSM 15139 / CIP 105565 / TT01) (Photorhabdus luminescens subsp. laumondii).